A 198-amino-acid chain; its full sequence is Putative coiled-coil domain-containing protein 196 (198 aa).

The stretch at 24 to 117 (NYLKELNEDL…RKEMEMLWNK (94 aa)) forms a coiled coil. Basic and acidic residues-rich tracts occupy residues 135 to 144 (NKTDLQDGKA) and 154 to 167 (TKNELETLCAEKGK). Positions 135 to 198 (NKTDLQDGKA…VSGTSQHHSE (64 aa)) are disordered. A compositionally biased stretch (polar residues) spans 187–198 (GQVSGTSQHHSE).

This Bos taurus (Bovine) protein is Putative coiled-coil domain-containing protein 196.